The primary structure comprises 194 residues: Large ribosomal subunit protein bL9 (194 aa).

Residues 165–194 (PEDAEEAVANEEEAEAALLDDEDADEYEQG) form a disordered region. Residues 166 to 194 (EDAEEAVANEEEAEAALLDDEDADEYEQG) show a composition bias toward acidic residues.

The protein belongs to the bacterial ribosomal protein bL9 family.

Binds to the 23S rRNA. This chain is Large ribosomal subunit protein bL9, found in Rhodospirillum rubrum (strain ATCC 11170 / ATH 1.1.1 / DSM 467 / LMG 4362 / NCIMB 8255 / S1).